A 9439-amino-acid chain; its full sequence is Extracellular matrix-binding protein ebh (9439 aa).

30 consecutive FIVAR domains span residues 1815–1871, 1901–1957, 1985–2041, 2071–2127, 2155–2211, 2241–2297, 2325–2381, 2411–2467, 2488–2551, 2581–2638, 2665–2720, 2748–2804, 2832–2888, 2918–2974, 3002–3058, 3088–3144, 3172–3228, 3258–3314, 3335–3398, 3428–3484, 3512–3567, 3595–3650, 3678–3733, 3802–3860, 3928–3983, 4056–4114, 4182–4240, 4308–4365, 4433–4491, and 4559–4617; these read ARRR…VNSA, AKEQ…INDA, AYDT…VRDA, AKKR…ITSE, AYNK…VTQA, AKNR…ISSE, AYNK…VEDA, AKEK…ITEN, DTTS…VNNA, ARNR…STEI, AKNQ…IRTN, AKTA…VSDE, AYNQ…VNNA, AKEQ…ISNA, AYNQ…VTAA, AKQQ…ITNE, AYNQ…VAQA, AKNQ…ISDE, DTTE…VNNA, ARLN…ITTE, AKTA…IKTN, IKRQ…VKES, AKNR…IRQN, SMTA…IDQK, AMTQ…LDPA, AMQA…VNQK, SMGT…VDNA, AMHT…INQK, VMEQ…IEQA, and SMQT…IDQT. The segment covering 2495-2507 has biased composition (basic and acidic residues); it reads EVRKLSRRGDTNN. Residues 2495 to 2514 form a disordered region; that stretch reads EVRKLSRRGDTNNKKPSSVS. The span at 2925-2938 shows a compositional bias: polar residues; sequence AVDQVPSTEGMTQQ. The disordered stretch occupies residues 2925–2951; the sequence is AVDQVPSTEGMTQQTKDDYNSKQQAAQ. The disordered stretch occupies residues 4649–4674; sequence GYLNDPQKSGEESLVNGSNTRSEVEE. FIVAR domains are found at residues 4685–4743, 4811–4869, 4937–4995, 5063–5115, 5189–5246, 5314–5372, 5440–5498, 5566–5624, 5692–5750, 5818–5875, 5943–6000, 6068–6126, 6194–6252, and 6320–6378; these read AMKQ…IEQK, AMQA…IEQA, AMSN…IEQA, AMEA…VLDK, AMLG…INQL, LMGA…VTTA, AMGE…IDQA, AMKK…ITNA, AMKQ…IADT, DMST…LQDL, AMKA…IKQA, KMEE…INRT, AMQQ…IQAI, and EMGT…IADA. Over residues 5699–5712 the composition is skewed to polar residues; sequence QVNQDDQISNSSPF. The segment at 5699-5719 is disordered; that stretch reads QVNQDDQISNSSPFINEDSDK. Residues 6413-6434 form a disordered region; that stretch reads NNSQRQSEHDEINSAPSRTEVS. FIVAR domains lie at 6446–6504, 6572–6630, 6698–6755, 6823–6877, 6949–7007, 7075–7133, 7201–7259, 7327–7384, 7452–7510, 7578–7636, 7704–7762, 7830–7888, 7956–8010, 8078–8137, 8205–8264, 8332–8391, 8459–8518, and 8587–8643; these read AMRQ…IEDA, AMKA…INRA, SMNQ…IDQA, TMKA…ANDE, AMKK…INTI, SMNT…VERA, DMKK…IENA, AMKH…IKQL, AMEN…IEHA, AMKA…INSI, AMET…VDIV, AMKS…VRQA, VMGK…TKQA, IMGE…IDTF, AMKS…IQGL, AMKD…VLGL, KMKL…IQHL, and AMQG…ANII. Residues 9306 to 9324 traverse the membrane as a helical segment; that stretch reads TVGVITLTGLLSSFWLVLA. Composition is skewed to basic and acidic residues over residues 9363–9375, 9386–9395, and 9404–9413; these read DKEEQIQNDDKHS, EKQLSEEDIH, and QNSDNKDTKQ. Residues 9363–9439 form a disordered region; sequence DKEEQIQNDD…VVKTKKRSKK (77 aa). Positions 9414 to 9439 are enriched in basic residues; it reads KKVTSKKKKTPQSTKKVVKTKKRSKK.

The protein localises to the cell membrane. The polypeptide is Extracellular matrix-binding protein ebh (ebh) (Staphylococcus epidermidis (strain ATCC 12228 / FDA PCI 1200)).